Reading from the N-terminus, the 515-residue chain is MVSIPEYYEGKNILLTGATGFLGKVLLEKLLRSCPRVNSVYVLVRQKAGQTPQERVEEILSSKLFDRLRDENPDFREKIIAINSELTQPKLALSEEDKEIIIDSTNVIFHCAATVRFNENLRDAVQLNVIATRQLILLAQQMKNLEVFMHVSTAYAYCNRKHIDEVVYPPPVDPKKLIDSLEWMDDGLVNDITPKLIGDRPNTYIYTKALAEYVVQQEGAKLNVAIVRPSIVGASWKEPFPGWIDNFNGPSGLFIAAGKGILRTMRASNNALADLVPVDVVVNTSLAAAWYSGVNRPRNIMVYNCTTGSTNPFHWGEVEYHVISTFKRNPLEQAFRRPNVNLTSNHLLYHYWIAVSHKAPAFLYDIYLRMTGRSPRMMKTITRLHKAMVFLEYFTSNSWVWNTDNVNMLMNQLNPEDKKTFNIDVRQLHWAEYIENYCMGTKKYVLNEEMSGLPAARKHLNKLRNIRYGFNTILVILIWRIFIARSQMARNIWYFVVSLCYKFLSYFRASSTMRY.

Topologically, residues 1–465 (MVSIPEYYEG…ARKHLNKLRN (465 aa)) are cytoplasmic. Residues 451-507 (SGLPAARKHLNKLRNIRYGFNTILVILIWRIFIARSQMARNIWYFVVSLCYKFLSYF) are necessary and sufficient for PEX19-mediated localization into peroxisome membrane. The helical transmembrane segment at 466-483 (IRYGFNTILVILIWRIFI) threads the bilayer. Residues 484-515 (ARSQMARNIWYFVVSLCYKFLSYFRASSTMRY) lie on the Peroxisomal side of the membrane.

It belongs to the fatty acyl-CoA reductase family. Interacts with PEX19; PEX19 mediates the targeting of FAR1 to peroxisomes. As to expression, widely expressed. Expressed in all tissues examined. Highest expression seen in preputial gland. Expressed in the brain where large quantities of ether lipids are synthesized.

Its subcellular location is the peroxisome membrane. The enzyme catalyses a long-chain fatty acyl-CoA + 2 NADPH + 2 H(+) = a long-chain primary fatty alcohol + 2 NADP(+) + CoA. The catalysed reaction is hexadecanoyl-CoA + 2 NADPH + 2 H(+) = hexadecan-1-ol + 2 NADP(+) + CoA. It carries out the reaction octadecanoyl-CoA + 2 NADPH + 2 H(+) = octadecan-1-ol + 2 NADP(+) + CoA. It catalyses the reaction (9Z)-octadecenoyl-CoA + 2 NADPH + 2 H(+) = (9Z)-octadecen-1-ol + 2 NADP(+) + CoA. The enzyme catalyses (9Z,12Z)-octadecadienoyl-CoA + 2 NADPH + 2 H(+) = (9Z,12Z)-octadecadien-1-ol + 2 NADP(+) + CoA. The catalysed reaction is eicosanoyl-CoA + 2 NADPH + 2 H(+) = eicosan-1-ol + 2 NADP(+) + CoA. It carries out the reaction 16-methylheptadecanoyl-CoA + 2 NADPH + 2 H(+) = 16-methylheptadecan-1-ol + 2 NADP(+) + CoA. It catalyses the reaction 18-methylnonadecanoyl-CoA + 2 NADPH + 2 H(+) = 18-methylnonadecan-1-ol + 2 NADP(+) + CoA. In terms of biological role, catalyzes the reduction of saturated and unsaturated C16 or C18 fatty acyl-CoA to fatty alcohols. It plays an essential role in the production of ether lipids/plasmalogens which synthesis requires fatty alcohols. In parallel, it is also required for wax monoesters production since fatty alcohols also constitute a substrate for their synthesis. The polypeptide is Fatty acyl-CoA reductase 1 (Mus musculus (Mouse)).